The sequence spans 57 residues: Small ribosomal subunit protein bS21 (57 aa).

Positions 24–57 (SKSGTLQESRKREFYEKPSVKRKKKSEAARKRKF) are disordered. The span at 31–42 (ESRKREFYEKPS) shows a compositional bias: basic and acidic residues. The span at 43–57 (VKRKKKSEAARKRKF) shows a compositional bias: basic residues.

The protein belongs to the bacterial ribosomal protein bS21 family.

This Listeria innocua serovar 6a (strain ATCC BAA-680 / CLIP 11262) protein is Small ribosomal subunit protein bS21 (rpsU).